The primary structure comprises 426 residues: Lactate racemase (426 aa).

72–75 provides a ligand contact to Ni(II)-pyridinium-3,5-bisthiocarboxylate mononucleotide; that stretch reads DHTR. Active-site proton donor/acceptor residues include histidine 108 and histidine 174. Positions 184 and 200 each coordinate Ni(II)-pyridinium-3,5-bisthiocarboxylate mononucleotide. Substrate-binding residues include glutamine 295 and lysine 298.

Belongs to the lactate racemase family. As to quaternary structure, homodimer. Ni(II)-pyridinium-3,5-bisthiocarboxylate mononucleotide is required as a cofactor.

It carries out the reaction (S)-lactate = (R)-lactate. With respect to regulation, activation of the apo-enzyme requires the three accessory proteins LarB, LarE and LarC, that are involved in the biosynthesis of the nickel-pincer cofactor of LarA. In terms of biological role, catalyzes the interconversion between the D- and L-isomers of lactate. The protein is Lactate racemase of Thermoanaerobacterium thermosaccharolyticum (strain ATCC 7956 / DSM 571 / NCIMB 9385 / NCA 3814 / NCTC 13789 / WDCM 00135 / 2032) (Clostridium thermosaccharolyticum).